The sequence spans 217 residues: Putative threonylcarbamoyl-AMP synthase (217 aa).

A YrdC-like domain is found at 14–199; that stretch reads SRGIVSAVGA…TPRVLRPGPV (186 aa).

The protein belongs to the SUA5 family.

The protein localises to the cytoplasm. The enzyme catalyses L-threonine + hydrogencarbonate + ATP = L-threonylcarbamoyladenylate + diphosphate + H2O. Required for the formation of a threonylcarbamoyl group on adenosine at position 37 (t(6)A37) in tRNAs that read codons beginning with adenine. Catalyzes the conversion of L-threonine, HCO(3)(-)/CO(2) and ATP to give threonylcarbamoyl-AMP (TC-AMP) as the acyladenylate intermediate, with the release of diphosphate. The polypeptide is Putative threonylcarbamoyl-AMP synthase (Mycobacterium tuberculosis (strain CDC 1551 / Oshkosh)).